We begin with the raw amino-acid sequence, 201 residues long: Ras-related protein Rab-1B (201 aa).

Residue Met1 is modified to N-acetylmethionine. GTP is bound by residues Ser17, Gly18, Val19, Gly20, Lys21, Ser22, Cys23, Tyr33, Thr34, Glu35, Ser36, Ser39, and Thr40. A Mg(2+)-binding site is contributed by Ser22. Residues 30 to 45 (DDTYTESYISTIGVDF) carry the Switch 1 motif. Mg(2+) is bound by residues Thr40 and Asp63. Residues 64–83 (TAGQERFRTITSSYYRGAHG) are switch 2 region; required for interaction with REP1/CHM. The Switch 2 motif lies at 65–80 (AGQERFRTITSSYYRG). Residue Gly66 coordinates GTP. Ser76 carries the post-translational modification (Microbial infection) O-(2-cholinephosphoryl)serine. A (Microbial infection) O-AMP-tyrosine modification is found at Tyr77. The GTP site is built by Asn121, Lys122, Asp124, Ser151, Ala152, and Lys153. The tract at residues 174 to 201 (GPGAASGGERPNLKIDSTPVKPAGGGCC) is disordered. 2 S-geranylgeranyl cysteine lipidation sites follow: Cys200 and Cys201. Cys201 carries the cysteine methyl ester modification.

It belongs to the small GTPase superfamily. Rab family. In terms of assembly, interacts with MICAL1 and MICAL2. Interacts (in GTP-bound form) with MICALCL, MICAL1 and MILCAL3. Interacts with GDI1; the interaction requires the GDP-bound state. Interacts with CHM/REP1; the interaction requires the GDP-bound form and is necessary for prenylation by GGTase II. Interacts with RabGAP TBC1D20. Interacts (in GDP-bound form) with lipid phosphatase MTMR6 (via GRAM domain); the interaction regulates MTMR6 recruitment to the endoplasmic reticulum-Golgi intermediate compartment. Interacts (in GDP-bound form) with lipid phosphatase MTMR7. As to quaternary structure, (Microbial infection) Interacts with L.pneumophila AnkX. Interacts with L.pneumophila Lem3. Interacts with L.pneumophila SidD. Interacts with L.pneumophila DrrA. Mg(2+) is required as a cofactor. In terms of processing, prenylated; by GGTase II, only after interaction of the substrate with Rab escort protein 1 (REP1). Post-translationally, (Microbial infection) AMPylation at Tyr-77 by L.pneumophila DrrA occurs in the switch 2 region and leads to moderate inactivation of the GTPase activity. It appears to prolong the lifetime of the GTP state of RAB1B by restricting access of GTPase effectors to switch 2 and blocking effector-stimulated GTP hydrolysis, thereby rendering RAB1B constitutively active. It is later de-AMPylated by L.pneumophila SidD, releasing RAB1B from bacterial phagosomes. (Microbial infection) Phosphocholinated at Ser-76 by L.pneumophila AnkX, leading to displace GDP dissociation inhibitors (GDI). Both GDP-bound and GTP-bound forms can be phosphocholinated. Dephosphocholinated by L.pneumophila Lem3, restoring accessibility to L.pneumophila GTPase effector LepB. In terms of processing, (Microbial infection) Glycosylated by S.typhimurium protein Ssek3: arginine GlcNAcylation prevents GTPase activity, thereby disrupting vesicular protein transport from the endoplasmic reticulum (ER) to the Golgi compartment.

Its subcellular location is the cytoplasm. It is found in the membrane. The protein resides in the preautophagosomal structure membrane. The protein localises to the perinuclear region. It carries out the reaction GTP + H2O = GDP + phosphate + H(+). Its activity is regulated as follows. Regulated by guanine nucleotide exchange factors (GEFs) which promote the exchange of bound GDP for free GTP. Regulated by GTPase activating proteins (GAPs) including TBC1D20 which increases the GTP hydrolysis activity. Inhibited by GDP dissociation inhibitors (GDIs). Its function is as follows. The small GTPases Rab are key regulators of intracellular membrane trafficking, from the formation of transport vesicles to their fusion with membranes. Rabs cycle between an inactive GDP-bound form and an active GTP-bound form that is able to recruit to membranes different set of downstream effectors directly responsible for vesicle formation, movement, tethering and fusion. Plays a role in the initial events of the autophagic vacuole development which take place at specialized regions of the endoplasmic reticulum. Regulates vesicular transport between the endoplasmic reticulum and successive Golgi compartments. Required to modulate the compacted morphology of the Golgi. Promotes the recruitment of lipid phosphatase MTMR6 to the endoplasmic reticulum-Golgi intermediate compartment. The sequence is that of Ras-related protein Rab-1B from Homo sapiens (Human).